A 208-amino-acid chain; its full sequence is N-(5'-phosphoribosyl)anthranilate isomerase (208 aa).

The protein belongs to the TrpF family.

The catalysed reaction is N-(5-phospho-beta-D-ribosyl)anthranilate = 1-(2-carboxyphenylamino)-1-deoxy-D-ribulose 5-phosphate. Its pathway is amino-acid biosynthesis; L-tryptophan biosynthesis; L-tryptophan from chorismate: step 3/5. The polypeptide is N-(5'-phosphoribosyl)anthranilate isomerase (Deinococcus radiodurans (strain ATCC 13939 / DSM 20539 / JCM 16871 / CCUG 27074 / LMG 4051 / NBRC 15346 / NCIMB 9279 / VKM B-1422 / R1)).